A 565-amino-acid polypeptide reads, in one-letter code: CTP synthase (565 aa).

An amidoligase domain region spans residues 1 to 272; it reads MARPKNVKHI…DLRVMKKLGL (272 aa). Residue serine 18 coordinates CTP. Serine 18 serves as a coordination point for UTP. An ATP-binding site is contributed by 19–24; it reads SLGKGI. Tyrosine 59 is a binding site for L-glutamine. Aspartate 76 provides a ligand contact to ATP. Mg(2+)-binding residues include aspartate 76 and glutamate 146. CTP-binding positions include 153 to 155, 193 to 198, and lysine 229; these read DIE and KTKPTQ. UTP-binding positions include 193–198 and lysine 229; that span reads KTKPTQ. The 245-residue stretch at 299–543 folds into the Glutamine amidotransferase type-1 domain; it reads TIGVCGKYTE…VAAAKEYEKG (245 aa). Position 363 (glycine 363) interacts with L-glutamine. Cysteine 390 (nucleophile; for glutamine hydrolysis) is an active-site residue. Residues 391–394, glutamate 414, and arginine 471 contribute to the L-glutamine site; that span reads LGMQ. Residues histidine 516 and glutamate 518 contribute to the active site.

This sequence belongs to the CTP synthase family. Homotetramer.

The catalysed reaction is UTP + L-glutamine + ATP + H2O = CTP + L-glutamate + ADP + phosphate + 2 H(+). It carries out the reaction L-glutamine + H2O = L-glutamate + NH4(+). It catalyses the reaction UTP + NH4(+) + ATP = CTP + ADP + phosphate + 2 H(+). It functions in the pathway pyrimidine metabolism; CTP biosynthesis via de novo pathway; CTP from UDP: step 2/2. Its activity is regulated as follows. Allosterically activated by GTP, when glutamine is the substrate; GTP has no effect on the reaction when ammonia is the substrate. The allosteric effector GTP functions by stabilizing the protein conformation that binds the tetrahedral intermediate(s) formed during glutamine hydrolysis. Inhibited by the product CTP, via allosteric rather than competitive inhibition. Functionally, catalyzes the ATP-dependent amination of UTP to CTP with either L-glutamine or ammonia as the source of nitrogen. Regulates intracellular CTP levels through interactions with the four ribonucleotide triphosphates. The polypeptide is CTP synthase (Chlorobium phaeobacteroides (strain DSM 266 / SMG 266 / 2430)).